The following is a 125-amino-acid chain: Small ribosomal subunit protein uS13 (125 aa).

Residues 95–125 (GLPLRGQRTKTNARTRKGKRKTVANKKIASK) are disordered.

The protein belongs to the universal ribosomal protein uS13 family. In terms of assembly, part of the 30S ribosomal subunit. Forms a loose heterodimer with protein S19. Forms two bridges to the 50S subunit in the 70S ribosome.

Its function is as follows. Located at the top of the head of the 30S subunit, it contacts several helices of the 16S rRNA. In the 70S ribosome it contacts the 23S rRNA (bridge B1a) and protein L5 of the 50S subunit (bridge B1b), connecting the 2 subunits; these bridges are implicated in subunit movement. Contacts the tRNAs in the A and P-sites. The polypeptide is Small ribosomal subunit protein uS13 (Borreliella burgdorferi (strain ATCC 35210 / DSM 4680 / CIP 102532 / B31) (Borrelia burgdorferi)).